A 179-amino-acid chain; its full sequence is MQCPYCQHTNSRVLESRSSEGGQSIRRRRECLCCKHRFTTYERIEFVPITVIKHDGKKESFDPSKLLRGMVRACEKTGISYQKLETIVDDIEAQLQQRTQREVTSQEIGQLVLKYLRQENEVAYIRFASVYGRFQGIKDFVDTLKQLQEEDLVPSETIWKPANDDFSEQETPSTVMMPS.

The segment at 3–34 (CPYCQHTNSRVLESRSSEGGQSIRRRRECLCC) is a zinc-finger region. Residues 49–139 (ITVIKHDGKK…VYGRFQGIKD (91 aa)) enclose the ATP-cone domain. A disordered region spans residues 160 to 179 (KPANDDFSEQETPSTVMMPS). Polar residues predominate over residues 169–179 (QETPSTVMMPS).

This sequence belongs to the NrdR family. Zn(2+) serves as cofactor.

Functionally, negatively regulates transcription of bacterial ribonucleotide reductase nrd genes and operons by binding to NrdR-boxes. The chain is Transcriptional repressor NrdR from Rippkaea orientalis (strain PCC 8801 / RF-1) (Cyanothece sp. (strain PCC 8801)).